The following is a 351-amino-acid chain: D-alanine--D-alanine ligase (351 aa).

One can recognise an ATP-grasp domain in the interval 146 to 340 (KEIMLYNNIK…YEDLCESIVL (195 aa)). 173–226 (AFDYPMVVKPNSGGSSIGTRIVHDEAELAESLKDAYRFDDEIIVEEFITGREFS) serves as a coordination point for ATP. Residues Asp-295, Glu-307, and Asn-309 each coordinate Mg(2+).

This sequence belongs to the D-alanine--D-alanine ligase family. The cofactor is Mg(2+). It depends on Mn(2+) as a cofactor.

Its subcellular location is the cytoplasm. It catalyses the reaction 2 D-alanine + ATP = D-alanyl-D-alanine + ADP + phosphate + H(+). It functions in the pathway cell wall biogenesis; peptidoglycan biosynthesis. Functionally, cell wall formation. This is D-alanine--D-alanine ligase from Pediococcus pentosaceus (strain ATCC 25745 / CCUG 21536 / LMG 10740 / 183-1w).